The primary structure comprises 158 residues: Protein GLUTAMINE DUMPER 1 (158 aa).

Residues 1–36 are Extracellular-facing; it reads MRPLSVQSKFEDVATSTSVNHHGVTPQSPWHSPVPY. Residues 37–57 form a helical membrane-spanning segment; it reads LFGGLAAMLGLIAFALLILAC. Topologically, residues 58–158 are cytoplasmic; sequence SYWRLSSSGE…DTGETTTTSH (101 aa). The interval 65-85 is disordered; it reads SGEEDGQNVDEEKESRSGDKA. Acidic residues predominate over residues 66-76; that stretch reads GEEDGQNVDEE. Positions 96 to 100 match the VIMAG motif; it reads VIMAG. The disordered stretch occupies residues 126–158; sequence ISQEESVAKEEEKMREGEEEKVKDTGETTTTSH. Over residues 131 to 151 the composition is skewed to basic and acidic residues; it reads SVAKEEEKMREGEEEKVKDTG.

The protein belongs to the GLUTAMINE DUMPER 1 (TC 9.B.60) family. In terms of assembly, interacts with LOG2. Ubiquitinated by LOG2 (in vitro). In terms of tissue distribution, expressed in the vascular tissues and in hydathodes. Expressed in the phloem and xylem (at the protein level).

It localises to the cell membrane. Functionally, probable subunit of an amino acid transporter involved in the regulation of the amino acid metabolism. Stimulates amino acid export by activating nonselective amino acid facilitators. Required the interaction with the RING-type E3 ubiquitin-protein ligase LOG2 to fulfill its function. Plays a role in the Gln export at hydathodes, at xylem parenchyma into xylem sap and from mesophyll into leaf apoplasm. Acts upstream genes involved in the salicylic acid (SA) pathway and in the geminivirus-host interaction. In Arabidopsis thaliana (Mouse-ear cress), this protein is Protein GLUTAMINE DUMPER 1 (GDU1).